The sequence spans 402 residues: Triose phosphate/phosphate translocator, chloroplastic (402 aa).

A chloroplast-targeting transit peptide spans 1-72 (MESRVLSRAT…KGASLLRPCP (72 aa)). Residues 73 to 96 (ATAGGNDSAGEEKVAPVGFFSRYP) lie on the Chloroplast intermembrane side of the membrane. Residues 97 to 117 (ALTTGFFFFTWYFLNVIFNIL) form a helical membrane-spanning segment. Residues 118–129 (NKKIYNYFPYPY) lie on the Lumenal side of the membrane. The chain crosses the membrane as a helical span at residues 130-150 (FVSVIHLAVGVVYCLVSWTVG). The Chloroplast intermembrane segment spans residues 151 to 207 (LPKRAPIDGNLLKLLIPVAVCHALGHVTSNVSFAAVAVSFTHTVKALEPFFNAAASQ). The helical transmembrane segment at 208–228 (FILGQSIPITLWLSLAPVVIG) threads the bilayer. Topologically, residues 229–272 (VSMASLTELSFNWLGFISAMISNISFTYRSIYSKKAMTDMDSTN) are lumenal. Residues 273-292 (IYAYISIIALIVCIPPALII) form a helical membrane-spanning segment. The Chloroplast intermembrane segment spans residues 293 to 370 (EGPTLLKTGF…IIFGNKISTQ (78 aa)). Residues 371–391 (TGIGTGIAIAGVALYSFIKAQ) form a helical membrane-spanning segment. Topologically, residues 392–402 (IEEEKRQAKAA) are lumenal.

It belongs to the TPT transporter family. TPT (TC 2.A.7.9) subfamily. Homodimer.

It is found in the plastid. The protein localises to the chloroplast membrane. Functionally, mediates the export of fixed carbons from the chloroplasts into the cytosol in the form of triose phosphates. This Pisum sativum (Garden pea) protein is Triose phosphate/phosphate translocator, chloroplastic.